The primary structure comprises 342 residues: Selenide, water dikinase (342 aa).

The active site involves C13. Residues K16 and S44 to D46 each bind ATP. Residue D47 coordinates Mg(2+). Residues D64, D87, and G134–S136 each bind ATP. Residue D87 coordinates Mg(2+). D222 contributes to the Mg(2+) binding site.

This sequence belongs to the selenophosphate synthase 1 family. Class I subfamily. Homodimer. It depends on Mg(2+) as a cofactor.

It carries out the reaction hydrogenselenide + ATP + H2O = selenophosphate + AMP + phosphate + 2 H(+). In terms of biological role, synthesizes selenophosphate from selenide and ATP. The protein is Selenide, water dikinase of Agathobacter rectalis (strain ATCC 33656 / DSM 3377 / JCM 17463 / KCTC 5835 / VPI 0990) (Eubacterium rectale).